The chain runs to 82 residues: Proline, histidine and glycine-rich protein 1 (82 aa).

Residues 20–82 are disordered; the sequence is HCGPPPGHGP…PGHPPPGPHH (63 aa).

This chain is Proline, histidine and glycine-rich protein 1 (PHGR1), found in Homo sapiens (Human).